The primary structure comprises 632 residues: Chaperone protein DnaK (632 aa).

The residue at position 198 (Thr198) is a Phosphothreonine; by autocatalysis. A disordered region spans residues 599–632 (YKKAGASQQGAGSTTQSKKEEDVIEAEVEDKDNK). Over residues 604 to 614 (ASQQGAGSTTQ) the composition is skewed to polar residues. Residues 620–632 (DVIEAEVEDKDNK) are compositionally biased toward acidic residues.

Belongs to the heat shock protein 70 family.

Its function is as follows. Acts as a chaperone. The protein is Chaperone protein DnaK of Thermodesulfovibrio yellowstonii (strain ATCC 51303 / DSM 11347 / YP87).